The chain runs to 954 residues: Serine/threonine-protein kinase ste20 (954 aa).

Over residues 1–17 (MDGQLSLLSPTSSSSTS) the composition is skewed to low complexity. 2 disordered regions span residues 1–165 (MDGQ…YDPL) and 203–316 (AAPA…RKKS). Over residues 18–28 (HSRKRLTKKQR) the composition is skewed to basic residues. Polar residues-rich tracts occupy residues 33-42 (NHRTSSSFNV), 57-75 (SASS…SLAR), and 100-121 (RSHT…TIPT). 3 stretches are compositionally biased toward low complexity: residues 127 to 136 (SPASSSQPQT), 143 to 153 (SAVASTTVTSS), and 203 to 214 (AAPAPTSTTTIA). A compositionally biased stretch (pro residues) spans 224–234 (VAPPPPPPPPA). 2 stretches are compositionally biased toward low complexity: residues 245–256 (ARSSKPSKSPKS) and 265–277 (ASSF…FSSA). One can recognise a CRIB domain in the interval 334 to 347 (ISAPENPVHVTHVG). Disordered stretches follow at residues 440 to 562 (PMIS…VQAS) and 587 to 655 (QAMA…SNAI). Composition is skewed to pro residues over residues 463 to 475 (RAPP…PGPL) and 514 to 527 (MPPP…PYLP). The region spanning 674–925 (YRGFTKIGQG…AHDLLRHDFM (252 aa)) is the Protein kinase domain. Residues 680 to 688 (IGQGASGGV) and Lys-703 contribute to the ATP site. Asp-793 serves as the catalytic Proton acceptor.

Belongs to the protein kinase superfamily. STE Ser/Thr protein kinase family. STE20 subfamily.

It is found in the cytoplasm. Its subcellular location is the nucleus. The catalysed reaction is L-seryl-[protein] + ATP = O-phospho-L-seryl-[protein] + ADP + H(+). It catalyses the reaction L-threonyl-[protein] + ATP = O-phospho-L-threonyl-[protein] + ADP + H(+). Its function is as follows. MAP4K component of the MAPK pathway required for the mating pheromone response and the regulation of cell polarity and cell cycle. Phosphorylates histone H2B to form H2BS10ph. This is Serine/threonine-protein kinase ste20 (stk-4) from Neurospora crassa (strain ATCC 24698 / 74-OR23-1A / CBS 708.71 / DSM 1257 / FGSC 987).